Reading from the N-terminus, the 394-residue chain is Elongation factor Tu (394 aa).

Residues 10–205 (KPHVNIGTIG…VDNWIPLPPR (196 aa)) enclose the tr-type G domain. Residues 19–26 (GHVDHGKT) are G1. GTP is bound at residue 19-26 (GHVDHGKT). Threonine 26 contacts Mg(2+). The interval 60-64 (GITIN) is G2. The G3 stretch occupies residues 81–84 (DCPG). GTP is bound by residues 81 to 85 (DCPGH) and 136 to 139 (NKCD). The segment at 136–139 (NKCD) is G4. The segment at 174 to 176 (SAL) is G5.

Belongs to the TRAFAC class translation factor GTPase superfamily. Classic translation factor GTPase family. EF-Tu/EF-1A subfamily. In terms of assembly, monomer.

It localises to the cytoplasm. It carries out the reaction GTP + H2O = GDP + phosphate + H(+). GTP hydrolase that promotes the GTP-dependent binding of aminoacyl-tRNA to the A-site of ribosomes during protein biosynthesis. This is Elongation factor Tu from Bacteroides thetaiotaomicron (strain ATCC 29148 / DSM 2079 / JCM 5827 / CCUG 10774 / NCTC 10582 / VPI-5482 / E50).